A 351-amino-acid chain; its full sequence is Large ribosomal subunit protein uL3 (351 aa).

Disordered regions lie at residues 1 to 31 and 246 to 271; these read MGHR…TPRT and KGSR…GQLG.

This sequence belongs to the universal ribosomal protein uL3 family. Part of the 50S ribosomal subunit. Forms a cluster with proteins L14 and L24e.

Functionally, one of the primary rRNA binding proteins, it binds directly near the 3'-end of the 23S rRNA, where it nucleates assembly of the 50S subunit. The sequence is that of Large ribosomal subunit protein uL3 from Saccharolobus islandicus (strain M.14.25 / Kamchatka #1) (Sulfolobus islandicus).